Here is a 427-residue protein sequence, read N- to C-terminus: Serine hydroxymethyltransferase (427 aa).

Residue 120 to 122 (GHI) coordinates (6S)-5,6,7,8-tetrahydrofolate. N6-(pyridoxal phosphate)lysine is present on lysine 226.

It belongs to the SHMT family. In terms of assembly, homodimer. Requires pyridoxal 5'-phosphate as cofactor.

It is found in the cytoplasm. It participates in amino-acid biosynthesis; glycine biosynthesis; glycine from L-serine: step 1/1. In terms of biological role, catalyzes the reversible interconversion of serine and glycine with a modified folate serving as the one-carbon carrier. Also exhibits a pteridine-independent aldolase activity toward beta-hydroxyamino acids, producing glycine and aldehydes, via a retro-aldol mechanism. The sequence is that of Serine hydroxymethyltransferase from Pyrococcus abyssi (strain GE5 / Orsay).